Reading from the N-terminus, the 387-residue chain is Probable peptidoglycan glycosyltransferase FtsW (387 aa).

The next 9 membrane-spanning stretches (helical) occupy residues 19–39, 61–81, 86–106, 118–138, 161–181, 199–219, 286–306, 320–340, and 352–372; these read LDFSLYATVAILISVGIVMVA, ITFLAMGLVGGLVILAVPMSV, SGLLLILAFFLLMAVLIPGIG, LGPFSMQASEIAKFCLIVYFA, VLLIIVLLLLLEPDFGSSVVI, FLLLAVSGVAGLALMAVASPY, FIGAIALIGVFGFFLYRLVIL, YVVFGIGVMLAMQAFINMGVA, and PFISYGGSSLLITCGLMALVF.

It belongs to the SEDS family. FtsW subfamily.

Its subcellular location is the cell inner membrane. It carries out the reaction [GlcNAc-(1-&gt;4)-Mur2Ac(oyl-L-Ala-gamma-D-Glu-L-Lys-D-Ala-D-Ala)](n)-di-trans,octa-cis-undecaprenyl diphosphate + beta-D-GlcNAc-(1-&gt;4)-Mur2Ac(oyl-L-Ala-gamma-D-Glu-L-Lys-D-Ala-D-Ala)-di-trans,octa-cis-undecaprenyl diphosphate = [GlcNAc-(1-&gt;4)-Mur2Ac(oyl-L-Ala-gamma-D-Glu-L-Lys-D-Ala-D-Ala)](n+1)-di-trans,octa-cis-undecaprenyl diphosphate + di-trans,octa-cis-undecaprenyl diphosphate + H(+). It participates in cell wall biogenesis; peptidoglycan biosynthesis. Peptidoglycan polymerase that is essential for cell division. The chain is Probable peptidoglycan glycosyltransferase FtsW from Saccharophagus degradans (strain 2-40 / ATCC 43961 / DSM 17024).